Reading from the N-terminus, the 118-residue chain is Large ribosomal subunit protein bL20 (118 aa).

The protein belongs to the bacterial ribosomal protein bL20 family.

Binds directly to 23S ribosomal RNA and is necessary for the in vitro assembly process of the 50S ribosomal subunit. It is not involved in the protein synthesizing functions of that subunit. The protein is Large ribosomal subunit protein bL20 of Ralstonia pickettii (strain 12J).